A 528-amino-acid polypeptide reads, in one-letter code: Linear element-associated protein hop1 (528 aa).

Residues 11–212 (TKSDFTLKNL…RGEFKDIVSF (202 aa)) form the HORMA domain. The segment at 334–385 (LLNCECGDSTEDSEMFQCERCDGWVHCACYGFESDSDPRQPNQLLCYTCLLV) adopts a PHD-type zinc-finger fold. Residues Cys337, Cys339, Cys351, Cys354, His359, Cys362, Cys379, and Cys382 each coordinate Zn(2+). The interval 507–528 (RPKKVSKTSNTKETDTMKPLRI) is disordered. The segment covering 516–528 (NTKETDTMKPLRI) has biased composition (basic and acidic residues).

Interacts (via N-terminus) with rec10; the interaction is direct. Interacts (via C-terminus) with rec15 (via C-terminus); the interaction is direct.

The protein localises to the nucleus. Its subcellular location is the chromosome. In terms of biological role, facilitates initiation of meiotic recombination and DNA double-strand break (DSB) formation at DSB hotspot sites by enhancing the interaction between rec10 and rec15. This Schizosaccharomyces pombe (strain 972 / ATCC 24843) (Fission yeast) protein is Linear element-associated protein hop1.